Consider the following 128-residue polypeptide: Prefoldin subunit 1 (128 aa).

Coiled-coil stretches lie at residues 17-37 and 81-115; these read MIEL…KEGD and LKDS…LLQQ.

Belongs to the prefoldin subunit beta family. As to quaternary structure, heterohexamer of two PFD-alpha type and four PFD-beta type subunits forming prefoldin co-chaperone complex. Interacts with LSM8, a specific subunit of the LSM2-8 complex, which is a core component of the spliceosome.

The protein localises to the cytoplasm. It localises to the nucleus. Binds specifically to cytosolic chaperonin (c-CPN) and transfers target proteins to it. Binds to nascent polypeptide chain and promotes folding in an environment in which there are many competing pathways for nonnative proteins. Together with other chaperonins, contribute to the regulation of gene expression by modulating the spliceosome function on pre-mRNA splicing post-transcriptionally by acting as a co-chaperone of Hsp90 to control levels of LSM8. Required for microtubules (MTs) organization and dynamicity. Involved in the process leading to microtubules dissociation in response to gibberellic acid (GA) probably due to the DELLA proteins-mediated translocation of the prefoldin co-chaperone complex from the cytoplasm to the nucleus. The sequence is that of Prefoldin subunit 1 from Arabidopsis thaliana (Mouse-ear cress).